Consider the following 167-residue polypeptide: Endoribonuclease YbeY (167 aa).

H131, H135, and H141 together coordinate Zn(2+).

It belongs to the endoribonuclease YbeY family. It depends on Zn(2+) as a cofactor.

The protein resides in the cytoplasm. In terms of biological role, single strand-specific metallo-endoribonuclease involved in late-stage 70S ribosome quality control and in maturation of the 3' terminus of the 16S rRNA. The sequence is that of Endoribonuclease YbeY from Rickettsia akari (strain Hartford).